The primary structure comprises 229 residues: Pyridoxal phosphate homeostasis protein (229 aa).

Lys36 carries the N6-(pyridoxal phosphate)lysine modification.

This sequence belongs to the pyridoxal phosphate-binding protein YggS/PROSC family. Monomer.

Its function is as follows. Pyridoxal 5'-phosphate (PLP)-binding protein, which is involved in PLP homeostasis. In Buchnera aphidicola subsp. Schizaphis graminum (strain Sg), this protein is Pyridoxal phosphate homeostasis protein.